Reading from the N-terminus, the 306-residue chain is Phenylcoumaran benzylic ether reductase POP1 (306 aa).

Residues 9 to 15 (GGTGYIG), Arg34, and Lys43 contribute to the NADP(+) site. Catalysis depends on Lys131, which acts as the Proton acceptor. Arg135 serves as a coordination point for NADP(+).

Belongs to the NmrA-type oxidoreductase family. Isoflavone reductase subfamily.

It carries out the reaction (-)-dehydrodiconiferyl alcohol + NADPH + H(+) = (S)-isodihydrodehydrodiconiferyl alcohol + NADP(+). It catalyses the reaction (+)-dehydrodiconiferyl alcohol + NADPH + H(+) = (R)-isodihydrodehydrodiconiferyl alcohol + NADP(+). The enzyme catalyses (2R,3S)-dihydrodehydrodiconiferyl alcohol + NADPH + H(+) = (S)-tetrahydrodehydrodiconiferyl alcohol + NADP(+). The catalysed reaction is (2S,3R)-dihydrodehydrodiconiferyl alcohol + NADPH + H(+) = (R)-tetrahydrodehydrodiconiferyl alcohol + NADP(+). Functionally, oxidoreductase involved in lignan biosynthesis. Catalyzes the NADPH-dependent reduction of phenylcoumaran benzylic ethers. Converts dehydrodiconiferyl alcohol (DDC) to isodihydrodehydrodiconiferyl alcohol (IDDDC), and dihydrodehydrodiconiferyl alcohol (DDDC) to tetrahydrodehydrodiconiferyl alcohol (TDDC). The protein is Phenylcoumaran benzylic ether reductase POP1 of Populus trichocarpa (Western balsam poplar).